The chain runs to 465 residues: Nucleolar and spindle-associated protein 1 (465 aa).

The stretch at alanine 32–alanine 61 forms a coiled coil. Disordered regions lie at residues lysine 44–serine 123, valine 148–phenylalanine 207, and glycine 252–lysine 294. Positions glutamate 56–glutamate 75 are enriched in polar residues. Residues glutamine 76 to threonine 86 show a composition bias toward basic and acidic residues. Basic residues predominate over residues lysine 87–histidine 96. At serine 152 the chain carries Phosphoserine. The span at proline 154–serine 166 shows a compositional bias: polar residues. Over residues histidine 169 to valine 179 the composition is skewed to basic and acidic residues. The residue at position 204 (threonine 204) is a Phosphothreonine. The interaction with microtubules stretch occupies residues glycine 262–glutamine 405. Serine 265 is modified (phosphoserine). At threonine 269 the chain carries Phosphothreonine. Phosphoserine is present on residues serine 272, serine 292, serine 299, and serine 334. Positions serine 308–proline 338 are disordered. Residues threonine 337, threonine 361, and threonine 372 each carry the phosphothreonine modification. Residues serine 375 and serine 386 each carry the phosphoserine modification. The disordered stretch occupies residues histidine 396–glycine 454. Positions lysine 407–histidine 413 match the KEN box motif. A coiled-coil region spans residues arginine 430–arginine 457. Positions glutamine 432–leucine 453 are enriched in basic and acidic residues.

Belongs to the NUSAP family. In terms of assembly, interacts with DNA and microtubules. Microtubule bundling is inhibited by IPO7, KPNA2 and KPNB1 while association with DNA is also inhibited by IPO7 and KPNA2. Ubiquitinated. Ubiquitination by FZR1 may lead to proteasome-dependent degradation of this protein.

It localises to the cytoplasm. Its subcellular location is the nucleus. It is found in the nucleolus. The protein localises to the cytoskeleton. The protein resides in the spindle. It localises to the chromosome. Its function is as follows. Microtubule-associated protein with the capacity to bundle and stabilize microtubules. May associate with chromosomes and promote the organization of mitotic spindle microtubules around them. In Bos taurus (Bovine), this protein is Nucleolar and spindle-associated protein 1 (NUSAP1).